Reading from the N-terminus, the 225-residue chain is Thymidylate kinase (225 aa).

10–17 (GGEGAGKT) contacts ATP.

This sequence belongs to the thymidylate kinase family.

The catalysed reaction is dTMP + ATP = dTDP + ADP. Its function is as follows. Phosphorylation of dTMP to form dTDP in both de novo and salvage pathways of dTTP synthesis. The chain is Thymidylate kinase from Oceanobacillus iheyensis (strain DSM 14371 / CIP 107618 / JCM 11309 / KCTC 3954 / HTE831).